The chain runs to 70 residues: uncharacterized protein (70 aa).

The helical transmembrane segment at 14-34 (CLVVWFACVYSLLILVVLLLI) threads the bilayer.

It is found in the virion membrane. This is an uncharacterized protein from Homo sapiens (Human).